The primary structure comprises 439 residues: Chitinase-like protein Idgf1 (439 aa).

An N-terminal signal peptide occupies residues 1-20; that stretch reads MRFQLFYILGLLSVTSLTHA. The GH18 domain maps to 22 to 439; that stretch reads SNLICYYDSN…ILRSIKYFMG (418 aa). A disulfide bond links Cys26 and Cys53. N-linked (GlcNAc...) asparagine glycans are attached at residues Asn122, Asn218, and Asn346. Cys340 and Cys423 are disulfide-bonded.

It belongs to the glycosyl hydrolase 18 family. IDGF subfamily. Primarily expressed in yolk cells and fat body. In larvae, it is expressed in large salivary gland cells and weakly expressed in imaginal disks. Less expressed than Idgf2 and Idgf4.

Its subcellular location is the secreted. Functionally, cooperates with insulin-like peptides to stimulate the proliferation, polarization and motility of imaginal disk cells. May act by stabilizing the binding of insulin-like peptides to its receptor through a simultaneous interaction with both molecules to form a multiprotein signaling complex. This chain is Chitinase-like protein Idgf1 (Idgf1), found in Drosophila melanogaster (Fruit fly).